A 250-amino-acid polypeptide reads, in one-letter code: Manganese transport system ATP-binding protein MntB (250 aa).

In terms of domain architecture, ABC transporter spans 5 to 236; sequence VKVDNLSVFY…MVAKTYQGNL (232 aa). ATP is bound at residue 37-44; the sequence is GPNGAGKS.

This sequence belongs to the ABC transporter superfamily.

It is found in the cell membrane. In terms of biological role, this protein is probably a component of a manganese permease, a binding protein-dependent, ATP-driven transport system. Probably responsible for energy coupling to the transport system. This is Manganese transport system ATP-binding protein MntB (mntB) from Halalkalibacterium halodurans (strain ATCC BAA-125 / DSM 18197 / FERM 7344 / JCM 9153 / C-125) (Bacillus halodurans).